Reading from the N-terminus, the 670-residue chain is Probable leucine-rich repeat receptor-like protein kinase At1g68400 (670 aa).

The signal sequence occupies residues 1-29 (MAKSSFFNKHLLLSLLILLQSCLLSSSSS). Topologically, residues 30–274 (TDSETLLNFK…KSNNTSRIST (245 aa)) are extracellular. N-linked (GlcNAc...) asparagine glycans are attached at residues Asn52, Asn79, Asn102, Asn109, and Asn112. 6 LRR repeats span residues 69 to 91 (RVTR…TSLT), 92 to 114 (SLRV…SNLT), 115 to 137 (ALKL…ITSL), 139 to 162 (RLYR…TDLT), 163 to 185 (HLLT…NLSD), and 186 to 207 (LQDF…LSQF). Asn149, Asn182, and Asn190 each carry an N-linked (GlcNAc...) asparagine glycan. Residues 230 to 266 (SSDPTKPGRPDEAKASPLNKPETVPSSPTSIHGGDKS) form a disordered region. Residues 253–266 (VPSSPTSIHGGDKS) show a composition bias toward polar residues. An N-linked (GlcNAc...) asparagine glycan is attached at Asn268. Residues 275–295 (ISLIAIILGDFIILSFVSLLL) traverse the membrane as a helical segment. The Cytoplasmic portion of the chain corresponds to 296–670 (YYCFWRQYAV…EDTCGGTTSQ (375 aa)). A Protein kinase domain is found at 362–636 (RASAEMLGKG…GHVVKLIEDI (275 aa)). At Ser364 the chain carries Phosphoserine. ATP-binding positions include 368 to 376 (LGKGGFGTA) and Lys390. A Phosphoserine modification is found at Ser443. Residue Thr463 is modified to Phosphothreonine. Asp491 (proton acceptor) is an active-site residue. Thr616 is modified (phosphothreonine).

It belongs to the protein kinase superfamily. Ser/Thr protein kinase family.

The protein resides in the cell membrane. It carries out the reaction L-seryl-[protein] + ATP = O-phospho-L-seryl-[protein] + ADP + H(+). The enzyme catalyses L-threonyl-[protein] + ATP = O-phospho-L-threonyl-[protein] + ADP + H(+). The sequence is that of Probable leucine-rich repeat receptor-like protein kinase At1g68400 from Arabidopsis thaliana (Mouse-ear cress).